The primary structure comprises 468 residues: uncharacterized protein (468 aa).

Helical transmembrane passes span 13 to 33, 40 to 60, 76 to 96, 112 to 132, 141 to 161, 194 to 214, 237 to 257, 260 to 280, 328 to 348, 354 to 374, 414 to 434, and 443 to 463; these read LEAF…YALF, LMII…HCYL, ALLI…GGTI, LYVT…TSWG, FMGV…AVVA, LLYT…VYGL, VYHF…GSIT, PTIP…ILIQ, CFCA…TVII, FVHS…TMIG, IIEP…TLGV, and AILC…GIGI.

It belongs to the NhaC Na(+)/H(+) (TC 2.A.35) antiporter family.

The protein resides in the cell membrane. This is an uncharacterized protein from Haemophilus influenzae (strain ATCC 51907 / DSM 11121 / KW20 / Rd).